We begin with the raw amino-acid sequence, 393 residues long: Lipid-A-disaccharide synthase (393 aa).

The protein belongs to the LpxB family.

It catalyses the reaction a lipid X + a UDP-2-N,3-O-bis[(3R)-3-hydroxyacyl]-alpha-D-glucosamine = a lipid A disaccharide + UDP + H(+). Its pathway is bacterial outer membrane biogenesis; LPS lipid A biosynthesis. Functionally, condensation of UDP-2,3-diacylglucosamine and 2,3-diacylglucosamine-1-phosphate to form lipid A disaccharide, a precursor of lipid A, a phosphorylated glycolipid that anchors the lipopolysaccharide to the outer membrane of the cell. In Colwellia psychrerythraea (strain 34H / ATCC BAA-681) (Vibrio psychroerythus), this protein is Lipid-A-disaccharide synthase.